Consider the following 357-residue polypeptide: Poly(3-hydroxyalkanoate) polymerase subunit PhaE (357 aa).

The segment at 320 to 357 is disordered; sequence AALAGEEPATKPATALRSPAPAAKAPARRRTTKTNPAD. Residues 331–344 are compositionally biased toward low complexity; that stretch reads PATALRSPAPAAKA.

Belongs to the PHA/PHB synthase family. Type III PhaE subfamily. As to quaternary structure, a large complex of PhaC and PhaE; the ratio of the subunits has been estimated to be from 1:1 to 4:1, with more PhaE than PhaC.

It is found in the cytoplasm. It participates in biopolymer metabolism; poly-(R)-3-hydroxybutanoate biosynthesis. Functionally, polymerizes D(-)-3-hydroxybutyryl-CoA to create polyhydroxybutyrate (PHB) which consists of thousands of hydroxybutyrate molecules linked end to end. This subunit has no catalytic activity but enhances the activity of PhaC, the catalytic subunit, 100-fold. This is Poly(3-hydroxyalkanoate) polymerase subunit PhaE from Allochromatium vinosum (strain ATCC 17899 / DSM 180 / NBRC 103801 / NCIMB 10441 / D) (Chromatium vinosum).